We begin with the raw amino-acid sequence, 763 residues long: Phosphoglycerol transferase I (763 aa).

The next 4 membrane-spanning stretches (helical) occupy residues 1–21, 26–46, 77–97, and 108–128; these read MSELLSFALFLASVLIYAWKA, WWFAATLTVLGLFVVLNITLF, ILPGIGIVLGLTAVFGALGWI, and FGYSLLALLLALGSVDASPAF.

The protein belongs to the OpgB family.

It localises to the cell inner membrane. The enzyme catalyses a phosphatidylglycerol + a membrane-derived-oligosaccharide D-glucose = a 1,2-diacyl-sn-glycerol + a membrane-derived-oligosaccharide 6-(glycerophospho)-D-glucose.. It participates in glycan metabolism; osmoregulated periplasmic glucan (OPG) biosynthesis. Its function is as follows. Transfers a phosphoglycerol residue from phosphatidylglycerol to the membrane-bound nascent glucan backbones. This is Phosphoglycerol transferase I from Escherichia coli (strain 55989 / EAEC).